The chain runs to 112 residues: Large ribosomal subunit protein uL22 (112 aa).

The protein belongs to the universal ribosomal protein uL22 family. Part of the 50S ribosomal subunit.

Its function is as follows. This protein binds specifically to 23S rRNA; its binding is stimulated by other ribosomal proteins, e.g. L4, L17, and L20. It is important during the early stages of 50S assembly. It makes multiple contacts with different domains of the 23S rRNA in the assembled 50S subunit and ribosome. In terms of biological role, the globular domain of the protein is located near the polypeptide exit tunnel on the outside of the subunit, while an extended beta-hairpin is found that lines the wall of the exit tunnel in the center of the 70S ribosome. The chain is Large ribosomal subunit protein uL22 from Sulfurovum sp. (strain NBC37-1).